An 89-amino-acid chain; its full sequence is Small ribosomal subunit protein uS15 (89 aa).

The protein belongs to the universal ribosomal protein uS15 family. As to quaternary structure, part of the 30S ribosomal subunit. Forms a bridge to the 50S subunit in the 70S ribosome, contacting the 23S rRNA.

Its function is as follows. One of the primary rRNA binding proteins, it binds directly to 16S rRNA where it helps nucleate assembly of the platform of the 30S subunit by binding and bridging several RNA helices of the 16S rRNA. Functionally, forms an intersubunit bridge (bridge B4) with the 23S rRNA of the 50S subunit in the ribosome. This Chlorobium limicola (strain DSM 245 / NBRC 103803 / 6330) protein is Small ribosomal subunit protein uS15.